Consider the following 102-residue polypeptide: Large ribosomal subunit protein bL21 (102 aa).

Belongs to the bacterial ribosomal protein bL21 family. In terms of assembly, part of the 50S ribosomal subunit. Contacts protein L20.

Its function is as follows. This protein binds to 23S rRNA in the presence of protein L20. This is Large ribosomal subunit protein bL21 from Pseudarthrobacter chlorophenolicus (strain ATCC 700700 / DSM 12829 / CIP 107037 / JCM 12360 / KCTC 9906 / NCIMB 13794 / A6) (Arthrobacter chlorophenolicus).